We begin with the raw amino-acid sequence, 261 residues long: 5'-nucleotidase SurE (261 aa).

A divalent metal cation is bound by residues Asp-8, Asp-9, Ser-39, and Asn-91.

The protein belongs to the SurE nucleotidase family. A divalent metal cation serves as cofactor.

The protein localises to the cytoplasm. It carries out the reaction a ribonucleoside 5'-phosphate + H2O = a ribonucleoside + phosphate. Functionally, nucleotidase that shows phosphatase activity on nucleoside 5'-monophosphates. The sequence is that of 5'-nucleotidase SurE from Polaromonas sp. (strain JS666 / ATCC BAA-500).